Here is a 1701-residue protein sequence, read N- to C-terminus: Merozoite surface protein 1 (1701 aa).

The first 19 residues, 1–19, serve as a signal peptide directing secretion; the sequence is MKIIFFLCSFLFFIINTQC. Residues 89 to 100 show a composition bias toward gly residues; the sequence is GSGGSVASGGSG. Positions 89–118 are disordered; sequence GSGGSVASGGSGNSRRTNPSDNSSDSNTKT. The span at 101 to 116 shows a compositional bias: low complexity; the sequence is NSRRTNPSDNSSDSNT. N-linked (GlcNAc...) asparagine glycosylation is found at asparagine 110 and asparagine 239. The disordered stretch occupies residues 322–344; sequence DAENPTTGSKPNPLPENKKKEVE. Asparagine 470, asparagine 536, and asparagine 607 each carry an N-linked (GlcNAc...) asparagine glycan. The tract at residues 704 to 739 is disordered; the sequence is SETTEDGGHSTHTLSQSGETEVTEETEVTEETVGHT. The segment covering 724–733 has biased composition (acidic residues); it reads EVTEETEVTE. N-linked (GlcNAc...) asparagine glycosylation is found at asparagine 802, asparagine 899, asparagine 919, asparagine 965, asparagine 991, asparagine 1089, and asparagine 1196. Positions 889-927 are enriched in low complexity; it reads TGTSSTSSPGNTTVNTAQSATHSNSQNQQSNASSTNTQN. A disordered region spans residues 889–936; it reads TGTSSTSSPGNTTVNTAQSATHSNSQNQQSNASSTNTQNGVAVSSGPA. Disordered regions lie at residues 1231 to 1259 and 1451 to 1472; these read PPQP…TQIP and KEKF…DEQK. Over residues 1245 to 1259 the composition is skewed to polar residues; sequence VSGSSGSTKEETQIP. Residues 1456–1465 show a composition bias toward pro residues; the sequence is SSPPTTPPSP. Residue asparagine 1588 is glycosylated (N-linked (GlcNAc...) asparagine). 2 consecutive EGF-like domains span residues 1592 to 1632 and 1633 to 1680; these read HQCV…VENP and NPTC…IFCS. 6 disulfide bridges follow: cysteine 1594–cysteine 1605, cysteine 1599–cysteine 1615, cysteine 1617–cysteine 1628, cysteine 1636–cysteine 1649, cysteine 1643–cysteine 1663, and cysteine 1665–cysteine 1679. Serine 1680 carries GPI-anchor amidated serine lipidation. Positions 1681–1701 are cleaved as a propeptide — removed in mature form; sequence SSNFLGISFLLILMLILYSFI.

Forms a complex composed of subunits p83, p30, p38, and p42 which remain non-covalently associated; the complex is formed at the merozoite surface prior to egress from host erythrocytes. Forms a complex composed of processed MSP1 subunits, MSP6 subunit p36 and MSP7; the complex is formed at the merozoite surface prior to egress from host erythrocytes. Within the complex, interacts (via subunit p38) with MSP6 subunit p36 and (via subunits p83, p30 and p38) with MSP7 (via subunit p22). Forms a complex composed of MSP1, MSP6, DBLMSP1 and DBLMSP2. Within the complex, interacts (via subunit p38) with DBLMSP1 and DBLMSP2. Forms a complex composed of MSP1, and rhoptry proteins RhopH3, RAP1 and CLAG9/RhopH3. Within the complex, interacts (via subunits p42 and p19) with RhopH3 (via C-terminus). Forms a complex composed of MSP1, MSP6, MSP7, MSP9 and MSP3; within the complex, MSP6 and MSP9 mediate the binding to the host erythrocyte. Interacts (via subunits p19 and p42) with MSP9; the interaction is direct; MSP1 subunits p19 or p42, and MSP9 form a co-ligand complex that interacts with host SLC4A1/Band 3 protein. May interact with PFD6. Interacts with host spectrin. In terms of assembly, interacts with host glycophorin GYPA in a sialic acid-independent manner. As to quaternary structure, interacts with host proinflammatory cytokine S100P; the interaction blocks S100P inflammatory and chemotactic activities. Interacts with host SLC4A1/Band 3 (via 5ABC region) on the host erythrocyte surface in a sialic acid-independent manner. The p190 precursor is cleaved by SUB1 prior to merozoite egress into 4 subunits p83, p30, p38, and p42 which remain non-covalently associated. SUB1-mediated proteolytic cleavage occurs in an orderly manner; the first cleavage occurs at the p30/p38 site, followed by cleavage at the p83/p30 site, in the 3D7 strain a second cleavage occurs at the N-terminus of p83, the last cleavage occurs at the p38/p42 site. The order of cleavage is essential for parasite viability. SUB1-mediated processing is essential for merozoite egress. In a second processing step during erythrocyte invasion, p42 is cleaved by SUB2 into p33 and p19; the latter remains attached to the merozoite surface via its GPI-anchor and is endocytosed during the subsequent ring stage.

Its subcellular location is the cell membrane. The protein localises to the secreted. The protein resides in the vacuole membrane. In terms of biological role, during the asexual blood stage, involved in merozoite egress from host erythrocytes possibly via its interaction with the host cytoskeleton protein spectrin resulting in the destabilization of the host cytoskeleton and thus leading to erythrocyte cell membrane rupture. Involved in the binding to host erythrocytes and is required for host erythrocyte invasion. By binding to host proinflammatory cytokine S100P may interfere with host immune responses. Its function is as follows. Involved in merozoite invasion of host erythrocytes. May play a role in the biogenesis and/or function of the food vacuole during the intraerythrocytic development. The polypeptide is Merozoite surface protein 1 (Plasmodium falciparum (isolate FC27 / Papua New Guinea)).